The sequence spans 908 residues: Translation initiation factor IF-2 (908 aa).

The tract at residues Gln52–Phe318 is disordered. Over residues Lys65–Val84 the composition is skewed to polar residues. Composition is skewed to basic and acidic residues over residues Phe94–Ala108, Ala120–Gln138, Ile176–Lys185, Pro193–Arg238, Ser270–Arg280, and Lys294–Asn303. Residues Thr409–Glu578 enclose the tr-type G domain. The segment at Gly418 to Thr425 is G1. A GTP-binding site is contributed by Gly418 to Thr425. Positions Gly443–His447 are G2. Residues Asp464–Gly467 are G3. GTP-binding positions include Asp464 to His468 and Asn518 to Asp521. Residues Asn518–Asp521 form a G4 region. Residues Ser554–Lys556 form a G5 region.

The protein belongs to the TRAFAC class translation factor GTPase superfamily. Classic translation factor GTPase family. IF-2 subfamily.

The protein resides in the cytoplasm. One of the essential components for the initiation of protein synthesis. Protects formylmethionyl-tRNA from spontaneous hydrolysis and promotes its binding to the 30S ribosomal subunits. Also involved in the hydrolysis of GTP during the formation of the 70S ribosomal complex. This is Translation initiation factor IF-2 from Psychrobacter cryohalolentis (strain ATCC BAA-1226 / DSM 17306 / VKM B-2378 / K5).